The primary structure comprises 149 residues: UPF0260 protein PFLU_1520 (149 aa).

This sequence belongs to the UPF0260 family.

This is UPF0260 protein PFLU_1520 from Pseudomonas fluorescens (strain SBW25).